The chain runs to 185 residues: Ribosome-recycling factor (185 aa).

Belongs to the RRF family.

The protein localises to the cytoplasm. Responsible for the release of ribosomes from messenger RNA at the termination of protein biosynthesis. May increase the efficiency of translation by recycling ribosomes from one round of translation to another. This Alkalilimnicola ehrlichii (strain ATCC BAA-1101 / DSM 17681 / MLHE-1) protein is Ribosome-recycling factor.